A 174-amino-acid polypeptide reads, in one-letter code: MPGQRKLGRATDQRKAILKNLTTALFVSGRIETTEARAKEVKNIAEKLITLAIKEADNFTSKQVKVSAAKVDSKGKKLTDTKTSKNGKKYFVVEREQKTDMVSVDNASRLHARRLIMNWVYRPTTADGKNINITDKLFDEIAPKYKDKKGGYTRIYKLGPRRGDAAEMVILELV.

The protein belongs to the bacterial ribosomal protein bL17 family. In terms of assembly, part of the 50S ribosomal subunit. Contacts protein L32.

This Ruminiclostridium cellulolyticum (strain ATCC 35319 / DSM 5812 / JCM 6584 / H10) (Clostridium cellulolyticum) protein is Large ribosomal subunit protein bL17.